The primary structure comprises 475 residues: Peripherin (475 aa).

A disordered region spans residues Met1–Ser42. Positions Met1–Gln103 are head. A compositionally biased stretch (low complexity) spans Gly14–Arg26. Tyr24 bears the 3'-nitrotyrosine mark. A phosphoserine mark is found at Ser35 and Ser57. Ser66 carries the post-translational modification Phosphoserine; by PKB/AKT1. The IF rod domain occupies Glu101–Ile411. The segment at Glu104 to Ala136 is coil 1A. The segment at Arg137–Leu147 is linker 1. The tract at residues Cys148 to Leu243 is coil 1B. The interval Gln244–Thr266 is linker 2. The segment at Ala267 to Ser409 is coil 2. Residue Tyr383 is modified to 3'-nitrotyrosine. A tail region spans residues Arg410–Tyr475. Residues Glu453–Tyr475 form a disordered region. Residue Tyr475 is modified to Phosphotyrosine.

The protein belongs to the intermediate filament family. In terms of assembly, forms homodimers (in vitro). Homopolymerizes into a filamentous network (in vitro). Forms heterodimers with NEFL, NEFM or NEFH (in vitro). Interacts with DST (via C-terminus). Interacts with RAB7A; the interaction is direct. Interacts with PRKCE (via phorbol-ester/DAG-type 2 domain). In terms of processing, phosphorylated; phosphorylation increases after nerve injury in regenerating neurons. Expressed in the sciatic nerve and at very low levels in the central nervous system (at protein level). Expressed in the spinal cord, in the sciatic nerve at the level of the dorsal root ganglion and in trigeminal nerves (at protein level). Expressed in the cranial nerves in the hindbrain, including the sensory and motor trigeminal neurons, the mesencephalic trigeminal neurons, the spinal trigeminal neurons, and in the facial nerve (at protein level). Expressed in the cerebellum, with expression in the inferior cerebellar peduncle and the lateral deep cerebellar nucleus (at protein level). Expressed in vestibulocochlear neurons, such as the anteroventral cochlear nucleus, the dorsal cochlear nucleus, the superficial granule cell layer and the granule cell lamina (at protein level). Expressed in glossopharyngeal, vagal and hypoglossal neurons (at protein level). Expressed in peripheral sensory neurons, in the dorsal root ganglia and the spinal cord, and to a lower extent in motor neurons. Expressed in the optic tract of the central nervous system, especially in the lateral geniculate nucleus and the superior colliculus. Expressed in neurons of the pineal stalk in the cortex. Expressed in the spinal trigeminal tract of the midbrain, in the medulla and in the medial cerebellar peduncle.

The protein localises to the cytoplasm. The protein resides in the cytoskeleton. It is found in the cell projection. It localises to the axon. Its subcellular location is the perikaryon. Class-III neuronal intermediate filament protein. May form an independent structural network without the involvement of other neurofilaments or may cooperate with the neuronal intermediate filament proteins NEFL, NEFH, NEFM and INA to form filamentous networks. Assembly of the neuronal intermediate filaments may be regulated by RAB7A. Plays a role in the development of unmyelinated sensory neurons. May be involved in axon elongation and axon regeneration after injury. Inhibits neurite extension in type II spiral ganglion neurons in the cochlea. This chain is Peripherin (Prph), found in Mus musculus (Mouse).